A 190-amino-acid polypeptide reads, in one-letter code: Elongation factor P (190 aa).

Belongs to the elongation factor P family.

The protein localises to the cytoplasm. It functions in the pathway protein biosynthesis; polypeptide chain elongation. Involved in peptide bond synthesis. Stimulates efficient translation and peptide-bond synthesis on native or reconstituted 70S ribosomes in vitro. Probably functions indirectly by altering the affinity of the ribosome for aminoacyl-tRNA, thus increasing their reactivity as acceptors for peptidyl transferase. The protein is Elongation factor P of Persephonella marina (strain DSM 14350 / EX-H1).